The chain runs to 74 residues: Small integral membrane protein 15 (74 aa).

The helical transmembrane segment at 20-40 threads the bilayer; sequence YGFLTTVILVLTPLFIISAAL. The stretch at 48–74 forms a coiled coil; it reads IETREREQKKKRKRQENIVKAKRAKKD. Positions 53 to 74 are disordered; it reads REQKKKRKRQENIVKAKRAKKD. The span at 56 to 74 shows a compositional bias: basic residues; it reads KKKRKRQENIVKAKRAKKD.

The protein belongs to the SMIM15 family.

It localises to the membrane. This chain is Small integral membrane protein 15 (SMIM15), found in Gallus gallus (Chicken).